A 216-amino-acid chain; its full sequence is Glycerol-3-phosphate acyltransferase (216 aa).

5 consecutive transmembrane segments (helical) span residues Thr-4 to Gly-24, Leu-71 to Ile-91, Val-113 to Leu-133, Val-144 to Leu-164, and Pro-165 to Arg-185.

This sequence belongs to the PlsY family. As to quaternary structure, probably interacts with PlsX.

It is found in the cell membrane. The enzyme catalyses an acyl phosphate + sn-glycerol 3-phosphate = a 1-acyl-sn-glycero-3-phosphate + phosphate. It participates in lipid metabolism; phospholipid metabolism. Functionally, catalyzes the transfer of an acyl group from acyl-phosphate (acyl-PO(4)) to glycerol-3-phosphate (G3P) to form lysophosphatidic acid (LPA). This enzyme utilizes acyl-phosphate as fatty acyl donor, but not acyl-CoA or acyl-ACP. This is Glycerol-3-phosphate acyltransferase from Streptococcus sanguinis (strain SK36).